The sequence spans 1483 residues: Heme-responsive zinc finger transcription factor HAP1 (1483 aa).

Residues 1-50 (MSNTPYNSSVPSIASMTQSSVSRSPNMHTATTPGANTSSNSPPLHMSSDS) show a composition bias toward polar residues. The segment at 1 to 56 (MSNTPYNSSVPSIASMTQSSVSRSPNMHTATTPGANTSSNSPPLHMSSDSSKIKRK) is disordered. 6 residues coordinate Zn(2+): Cys-64, Cys-67, Cys-74, Cys-81, Cys-84, and Cys-93. Positions 64–93 (CTICRKRKVKCDKLRPHCQQCTKTGVAHLC) form a DNA-binding region, zn(2)-C6 fungal-type. Positions 105 to 134 (EKELLKDNELKKLRERVKSLEKTLSKVHSS) form a coiled coil. The segment covering 162 to 176 (VNANTGSASSASHMH) has biased composition (polar residues). A disordered region spans residues 162–208 (VNANTGSASSASHMHQQQQQQQQQEQQQDFSRSANANANSSSLSISN). The span at 177–208 (QQQQQQQQQEQQQDFSRSANANANSSSLSISN) shows a compositional bias: low complexity. The interval 244-444 (KGDPYLKLLW…NTIPHHQPQS (201 aa)) is heme-responsive; required for HMC formation. HRM repeat units follow at residues 280–285 (KCPINH), 299–304 (KCPVDH), 323–328 (KCPVDH), 347–352 (RCPVDH), 389–394 (KCPVDH), and 415–420 (RCPIDH). 2 stretches are compositionally biased toward polar residues: residues 432–447 (STHN…SGSH) and 706–734 (QLNA…NPTL). Disordered regions lie at residues 432–458 (STHN…NRKH) and 706–767 (QLNA…KENQ). The span at 735 to 759 (NNNMSAATTNSSSRSGSADSRSGSN) shows a compositional bias: low complexity. The HRM 7 repeat unit spans residues 1192 to 1197 (KCPVYQ). Disordered stretches follow at residues 1266–1289 (DGYI…SNGL) and 1386–1411 (NTDT…ASNS). The span at 1388-1411 (DTSANGSALSTLTSPQGSDLASNS) shows a compositional bias: polar residues.

In terms of assembly, binds DNA as a homodimer. Interacts with SRO9 and YDJ1. In the absence of heme, binds to at least four cellular proteins, including YDJ1 and SRO9, forming a high-molecular-weight complex (HMC) which results in repression of its activity and dictates its DNA-binding specificity.

The protein resides in the nucleus. Functionally, regulation of oxygen dependent gene expression. It modulates the expression of Iso-1 (CYP1) and Iso-2 (CYP3) cytochrome c. In response to heme, promotes transcription of genes encoding functions required for respiration, controlling oxidative damage and repression of anaerobic genes. Binds to the sequence 5'-CGGNNNTNNCGG-3'. This chain is Heme-responsive zinc finger transcription factor HAP1 (HAP1), found in Saccharomyces cerevisiae (strain JAY291) (Baker's yeast).